A 189-amino-acid chain; its full sequence is 3-isopropylmalate dehydratase small subunit (189 aa).

The protein belongs to the LeuD family. LeuD type 1 subfamily. As to quaternary structure, heterodimer of LeuC and LeuD.

The enzyme catalyses (2R,3S)-3-isopropylmalate = (2S)-2-isopropylmalate. The protein operates within amino-acid biosynthesis; L-leucine biosynthesis; L-leucine from 3-methyl-2-oxobutanoate: step 2/4. Catalyzes the isomerization between 2-isopropylmalate and 3-isopropylmalate, via the formation of 2-isopropylmaleate. This is 3-isopropylmalate dehydratase small subunit from Staphylococcus epidermidis (strain ATCC 35984 / DSM 28319 / BCRC 17069 / CCUG 31568 / BM 3577 / RP62A).